We begin with the raw amino-acid sequence, 294 residues long: Large ribosomal subunit protein uL2c (294 aa).

Positions 224-249 (VMNPVDHPHGGGGEGKSPIGRSRPVT) are disordered.

It belongs to the universal ribosomal protein uL2 family. As to quaternary structure, part of the 50S ribosomal subunit.

The protein resides in the plastid. The protein localises to the chloroplast. This is Large ribosomal subunit protein uL2c (rpl2) from Porphyra purpurea (Red seaweed).